The following is a 147-amino-acid chain: uncharacterized protein (147 aa).

A helical transmembrane segment spans residues 3–23; that stretch reads APMIGMVVLVVVLGLAVLALS.

To M.leprae ML1147.

Its subcellular location is the membrane. This is an uncharacterized protein from Mycobacterium tuberculosis (strain CDC 1551 / Oshkosh).